Reading from the N-terminus, the 43-residue chain is Venom protein E2 (43 aa).

2 disulfide bridges follow: Cys3–Cys20 and Cys14–Cys39.

As to expression, expressed by the venom gland.

It is found in the secreted. Its function is as follows. Neurotoxin. Blocks muscular nicotinic acetylcholine receptors (nAChR). The polypeptide is Venom protein E2 (Micrurus pyrrhocryptus (Coral snake)).